We begin with the raw amino-acid sequence, 342 residues long: Glucokinase (342 aa).

An ATP-binding site is contributed by 18–23 (GDIGGT).

This sequence belongs to the bacterial glucokinase family.

It is found in the cytoplasm. The catalysed reaction is D-glucose + ATP = D-glucose 6-phosphate + ADP + H(+). The sequence is that of Glucokinase from Chelativorans sp. (strain BNC1).